The sequence spans 618 residues: uncharacterized protein (618 aa).

The segment at residues 18 to 47 (SCQRCRQRKIKCDRLHPCFQCVKSNSQCFY) is a DNA-binding region (zn(2)-C6 fungal-type). A Phosphoserine modification is found at serine 598.

It is found in the nucleus. This is an uncharacterized protein from Schizosaccharomyces pombe (strain 972 / ATCC 24843) (Fission yeast).